Consider the following 187-residue polypeptide: MATASRFLLRKLPRFLKLSPTLLRSNGVRVSSNLIQDSIEPLDSFWRIGSRIRHDSLTTRSFSSQGPASVDYSSVLQEEEFHKLANFTINHLLEKIEDYGDNVQIDGFDIDYGNEVLTLKLGSLGTYVLNKQTPNRQIWMSSPVSGPSRFDWDRDANAWIYRRTEAKLHKLLEEELENLCGEPIQLS.

The protein belongs to the frataxin family. As to quaternary structure, monomer. Oligomer. Interacts with NIFS1.

The protein localises to the mitochondrion. It carries out the reaction 4 Fe(2+) + O2 + 4 H(+) = 4 Fe(3+) + 2 H2O. Its function is as follows. Promotes the biosynthesis of heme as well as the assembly and repair of iron-sulfur clusters by delivering Fe(2+) to proteins involved in these pathways. May play a role in the protection against iron-catalyzed oxidative stress through its ability to catalyze the oxidation of Fe(2+) to Fe(3+). May be able to store large amounts of the metal in the form of a ferrihydrite mineral by oligomerization. Binds to the mitochondrial cysteine desulfurase NIFS1 and increases its activity. The sequence is that of Frataxin, mitochondrial (FH) from Arabidopsis thaliana (Mouse-ear cress).